A 178-amino-acid polypeptide reads, in one-letter code: Large ribosomal subunit protein uL6 (178 aa).

The protein belongs to the universal ribosomal protein uL6 family. In terms of assembly, part of the 50S ribosomal subunit.

This protein binds to the 23S rRNA, and is important in its secondary structure. It is located near the subunit interface in the base of the L7/L12 stalk, and near the tRNA binding site of the peptidyltransferase center. In Listeria innocua serovar 6a (strain ATCC BAA-680 / CLIP 11262), this protein is Large ribosomal subunit protein uL6.